The primary structure comprises 159 residues: Na(+)/H(+) antiporter subunit E1 (159 aa).

Transmembrane regions (helical) follow at residues 1-21 (MAIQIILNFILAFIWIFLSGS), 27-47 (LLLGFILGLGFVYLFSRILPG), 49-69 (FYFIKIYKILKLAVVFFVELL), and 101-121 (WQIVLLSNLITLTPGTVVLGI).

It belongs to the CPA3 antiporters (TC 2.A.63) subunit E family. May form a heterooligomeric complex that consists of seven subunits: mnhA1, mnhB1, mnhC1, mnhD1, mnhE1, mnhF1 and mnhG1.

The protein localises to the cell membrane. In terms of biological role, mnh complex is a Na(+)/H(+) antiporter involved in Na(+) excretion. The protein is Na(+)/H(+) antiporter subunit E1 (mnhE1) of Staphylococcus haemolyticus (strain JCSC1435).